The primary structure comprises 318 residues: GTP cyclohydrolase MptA (318 aa).

This sequence belongs to the GTP cyclohydrolase IV family. In terms of assembly, homodimer. Fe(2+) is required as a cofactor.

The catalysed reaction is GTP + H2O = 7,8-dihydroneopterin 2',3'-cyclic phosphate + formate + diphosphate + H(+). It functions in the pathway cofactor biosynthesis; 5,6,7,8-tetrahydromethanopterin biosynthesis. Functionally, converts GTP to 7,8-dihydro-D-neopterin 2',3'-cyclic phosphate, the first intermediate in the biosynthesis of coenzyme methanopterin. The protein is GTP cyclohydrolase MptA of Methanosarcina mazei (strain ATCC BAA-159 / DSM 3647 / Goe1 / Go1 / JCM 11833 / OCM 88) (Methanosarcina frisia).